A 600-amino-acid polypeptide reads, in one-letter code: NADH-quinone oxidoreductase subunit C/D (600 aa).

The interval 1–190 (MVNNMTDLTA…DPFELTKAKQ (190 aa)) is NADH dehydrogenase I subunit C. Residues 214–600 (DFMFLNLGPN…IDFVMSDVDR (387 aa)) are NADH dehydrogenase I subunit D.

It in the N-terminal section; belongs to the complex I 30 kDa subunit family. The protein in the C-terminal section; belongs to the complex I 49 kDa subunit family. In terms of assembly, NDH-1 is composed of 13 different subunits. Subunits NuoB, CD, E, F, and G constitute the peripheral sector of the complex.

It is found in the cell inner membrane. It catalyses the reaction a quinone + NADH + 5 H(+)(in) = a quinol + NAD(+) + 4 H(+)(out). NDH-1 shuttles electrons from NADH, via FMN and iron-sulfur (Fe-S) centers, to quinones in the respiratory chain. The immediate electron acceptor for the enzyme in this species is believed to be ubiquinone. Couples the redox reaction to proton translocation (for every two electrons transferred, four hydrogen ions are translocated across the cytoplasmic membrane), and thus conserves the redox energy in a proton gradient. The chain is NADH-quinone oxidoreductase subunit C/D from Salmonella paratyphi C (strain RKS4594).